A 254-amino-acid polypeptide reads, in one-letter code: rRNA N-glycosylase sapovaccarin-S1 (254 aa).

Belongs to the ribosome-inactivating protein family. Type 1 RIP subfamily. Expressed in seeds; most abundant in the perisperm.

The enzyme catalyses Endohydrolysis of the N-glycosidic bond at one specific adenosine on the 28S rRNA.. Exhibits N-glycosylase activity. Catalyzes the release of one adenine from a ribosome. Acts as a ribosome-inactivating protein and inhibits protein synthesis in a rabbit-reticulocyte lysate system and in various cell lines (in vitro). Induces cell death in Huh-7 liver cells. May contribute to the protection against plant pests and predators or play a role in regulating the death of plant cells. The polypeptide is rRNA N-glycosylase sapovaccarin-S1 (Gypsophila vaccaria (Cow soapwort)).